The chain runs to 372 residues: Alanine racemase (372 aa).

The active-site Proton acceptor; specific for D-alanine is K33. Residue K33 is modified to N6-(pyridoxal phosphate)lysine. R131 provides a ligand contact to substrate. Catalysis depends on Y261, which acts as the Proton acceptor; specific for L-alanine. M309 contributes to the substrate binding site.

The protein belongs to the alanine racemase family. Pyridoxal 5'-phosphate is required as a cofactor.

The enzyme catalyses L-alanine = D-alanine. The protein operates within amino-acid biosynthesis; D-alanine biosynthesis; D-alanine from L-alanine: step 1/1. Functionally, catalyzes the interconversion of L-alanine and D-alanine. May also act on other amino acids. The protein is Alanine racemase (alr) of Salinispora tropica (strain ATCC BAA-916 / DSM 44818 / JCM 13857 / NBRC 105044 / CNB-440).